A 409-amino-acid polypeptide reads, in one-letter code: Tryptophan synthase beta chain (409 aa).

Position 95 is an N6-(pyridoxal phosphate)lysine (lysine 95).

Belongs to the TrpB family. In terms of assembly, tetramer of two alpha and two beta chains. The cofactor is pyridoxal 5'-phosphate.

It catalyses the reaction (1S,2R)-1-C-(indol-3-yl)glycerol 3-phosphate + L-serine = D-glyceraldehyde 3-phosphate + L-tryptophan + H2O. Its pathway is amino-acid biosynthesis; L-tryptophan biosynthesis; L-tryptophan from chorismate: step 5/5. The beta subunit is responsible for the synthesis of L-tryptophan from indole and L-serine. In Pseudomonas syringae pv. syringae (strain B728a), this protein is Tryptophan synthase beta chain.